A 249-amino-acid polypeptide reads, in one-letter code: Small ribosomal subunit protein uS2 (249 aa).

The protein belongs to the universal ribosomal protein uS2 family.

The chain is Small ribosomal subunit protein uS2 from Bordetella avium (strain 197N).